Consider the following 376-residue polypeptide: Glucose-1-phosphate adenylyltransferase (376 aa).

Alpha-D-glucose 1-phosphate-binding positions include Y101, G166, 181–182 (EK), and S192.

The protein belongs to the bacterial/plant glucose-1-phosphate adenylyltransferase family. Homotetramer.

The enzyme catalyses alpha-D-glucose 1-phosphate + ATP + H(+) = ADP-alpha-D-glucose + diphosphate. It participates in glycan biosynthesis; glycogen biosynthesis. In terms of biological role, involved in the biosynthesis of ADP-glucose, a building block required for the elongation reactions to produce glycogen. Catalyzes the reaction between ATP and alpha-D-glucose 1-phosphate (G1P) to produce pyrophosphate and ADP-Glc. The sequence is that of Glucose-1-phosphate adenylyltransferase from Bacillus cereus (strain ZK / E33L).